The following is a 461-amino-acid chain: MKEYRTVAQIAGPLVFVEKTEPVGYSELVNIVTADGTVKRGQVLDTSDEIVVVQVFETTAGIGRDSGIRFTGETIKMPVGKDMLGRILSGGGKPIDGGPDIVPEKRLEITGAAINPYARSSPEDFIQTGISTIDGTNTLVRGQKLPIFSASGLPHNDVALQIARQAKVPGSTEEFAVVFAAMGITREEANYFMADFEKTGALERSVVFLNLADDPAVERTITPRLALTTAEYLAFDLGYHVLVILTDMTNYCEALRQIGAAREEVPGRRGYPGYMYTDLASIYERAGIIKGVKGSVTQIPILTMPGDDITHPIPDLTGYITEGQIVVNRELHRKGIYPPINVLPSLSRLMNLGIGEGHTREDHKKVSDQLYAAYAEGNDLRGLVAIVGKDALSERDRMFLEFADLFEDRFVRQGLYEDRSIEETLDLGWELLSTLPEEQLVRIDRELIQKYHPKYRKKAQG.

Belongs to the ATPase alpha/beta chains family. As to quaternary structure, has multiple subunits with at least A(3), B(3), C, D, E, F, H, I and proteolipid K(x).

It is found in the cell membrane. In terms of biological role, component of the A-type ATP synthase that produces ATP from ADP in the presence of a proton gradient across the membrane. The B chain is a regulatory subunit. The chain is A-type ATP synthase subunit B from Methanoculleus marisnigri (strain ATCC 35101 / DSM 1498 / JR1).